Reading from the N-terminus, the 517-residue chain is Retinal dehydrogenase 2 (517 aa).

Residues 184 to 186, 210 to 213, and 264 to 266 each bind NAD(+); these read IPW, KPAE, and STE. Glutamate 286 (proton acceptor) is an active-site residue. Residue cysteine 320 is the Nucleophile of the active site. NAD(+) contacts are provided by residues 366–370 and glutamate 417; that span reads KQYNK.

It belongs to the aldehyde dehydrogenase family. In terms of assembly, homotetramer. As to expression, expressed in the high vocal center (HVC) which integrates auditory and motor activities and constitutes a nodal nucleus on the song system.

It localises to the cytoplasm. The enzyme catalyses retinal + NAD(+) + H2O = retinoate + NADH + 2 H(+). It catalyses the reaction all-trans-retinal + NAD(+) + H2O = all-trans-retinoate + NADH + 2 H(+). The catalysed reaction is all-trans-13,14-dihydroretinal + NAD(+) + H2O = all-trans-13,14-dihydroretinoate + NADH + 2 H(+). Its pathway is cofactor metabolism; retinol metabolism. Catalyzes the NAD-dependent oxidation of aldehyde substrates, such as all-trans-retinal and all-trans-13,14-dihydroretinal, to their corresponding carboxylic acids, all-trans-retinoate and all-trans-13,14-dihydroretinoate, respectively. Retinoate signaling is critical for the transcriptional control of many genes, for instance it is crucial for initiation of meiosis in both male and female. Recognizes retinal as substrate, both in its free form and when bound to cellular retinol-binding protein. Lacks activity with benzaldehyde, acetaldehyde and octanal. Displays complete lack of activity with citral. Plays a significant role in the acquisition and production of learned songs. This chain is Retinal dehydrogenase 2 (ALDH1A2), found in Taeniopygia guttata (Zebra finch).